A 167-amino-acid polypeptide reads, in one-letter code: Ribonuclease H (167 aa).

One can recognise an RNase H type-1 domain in the interval 1–143; sequence MYKQIEIFTD…CDQLARKAAK (143 aa). Mg(2+) is bound by residues Asp-10, Glu-48, Asp-70, and Asp-135.

It belongs to the RNase H family. In terms of assembly, monomer. Mg(2+) is required as a cofactor.

The protein localises to the cytoplasm. The catalysed reaction is Endonucleolytic cleavage to 5'-phosphomonoester.. In terms of biological role, endonuclease that specifically degrades the RNA of RNA-DNA hybrids. The protein is Ribonuclease H of Blochmanniella floridana.